A 343-amino-acid chain; its full sequence is Protein RecA (343 aa).

Residue 68–75 (GPESSGKT) participates in ATP binding.

Belongs to the RecA family.

Its subcellular location is the cytoplasm. Functionally, can catalyze the hydrolysis of ATP in the presence of single-stranded DNA, the ATP-dependent uptake of single-stranded DNA by duplex DNA, and the ATP-dependent hybridization of homologous single-stranded DNAs. It interacts with LexA causing its activation and leading to its autocatalytic cleavage. The polypeptide is Protein RecA (Syntrophobacter fumaroxidans (strain DSM 10017 / MPOB)).